The chain runs to 416 residues: MSLVAIGINHKTATVDLREKVAFSPDSIHDAMKSLASRTRSGEAVILSTCNRTELYCNDAVATEVIEWLADYHDLNLQDLLACTYQHEDQAAVKHLMRVAAGLDSLVLGEPQILGQVKQAFVKAKEAGTTALTIDRLFQNTFSVAKKVRTETEIGAAAVSVAFAAVSMAKHIFSSLKATKVLLIGAGETIELVAKHLKDNGVASIVVANRTLERAQAMCQAFDATAITLQQIPDFLPKADIVISSTASPLPILGKGMVEKALKTRRHQPMLLVDIAVPRDIEAEVGELDDAFLYTVDDLHSIIEQNMASRKEAAEQAELITEDQSLLFMEWLTSLESVDSIREYRTQSLVIKDELVERALNKLAQGGDSEQVIIELANRLTNRLIHSPTQALTVASRQGDLTTLGQLRAALGLDKH.

Residues T49–R52, S105, E110–Q112, and Q116 contribute to the substrate site. Catalysis depends on C50, which acts as the Nucleophile. G185–I190 is a binding site for NADP(+).

Belongs to the glutamyl-tRNA reductase family. In terms of assembly, homodimer.

It carries out the reaction (S)-4-amino-5-oxopentanoate + tRNA(Glu) + NADP(+) = L-glutamyl-tRNA(Glu) + NADPH + H(+). It participates in porphyrin-containing compound metabolism; protoporphyrin-IX biosynthesis; 5-aminolevulinate from L-glutamyl-tRNA(Glu): step 1/2. Its function is as follows. Catalyzes the NADPH-dependent reduction of glutamyl-tRNA(Glu) to glutamate 1-semialdehyde (GSA). This Shewanella denitrificans (strain OS217 / ATCC BAA-1090 / DSM 15013) protein is Glutamyl-tRNA reductase.